A 431-amino-acid polypeptide reads, in one-letter code: Tryptophan synthase beta chain (431 aa).

Position 109 is an N6-(pyridoxal phosphate)lysine (Lys-109).

Belongs to the TrpB family. Tetramer of two alpha and two beta chains. Requires pyridoxal 5'-phosphate as cofactor.

The enzyme catalyses (1S,2R)-1-C-(indol-3-yl)glycerol 3-phosphate + L-serine = D-glyceraldehyde 3-phosphate + L-tryptophan + H2O. It functions in the pathway amino-acid biosynthesis; L-tryptophan biosynthesis; L-tryptophan from chorismate: step 5/5. Functionally, the beta subunit is responsible for the synthesis of L-tryptophan from indole and L-serine. This chain is Tryptophan synthase beta chain, found in Deinococcus radiodurans (strain ATCC 13939 / DSM 20539 / JCM 16871 / CCUG 27074 / LMG 4051 / NBRC 15346 / NCIMB 9279 / VKM B-1422 / R1).